The sequence spans 234 residues: Interleukin-27 subunit alpha (234 aa).

An N-terminal signal peptide occupies residues 1-28 (MGQVTGDLGWRLSLLLLPLLLVQAGSWG). N-linked (GlcNAc...) asparagine glycosylation occurs at Asn-85. The disordered stretch occupies residues 160–185 (KEEEDKEEEEEEEEEEKKLPLGALGG). Residues 161-174 (EEEDKEEEEEEEEE) show a composition bias toward acidic residues.

The protein belongs to the IL-6 superfamily. Heterodimer with EBI3; not disulfide-linked. This heterodimer is known as interleukin IL-27. Post-translationally, O-glycosylated. In terms of tissue distribution, expressed in macrophages and dendritic cells.

It is found in the secreted. Functionally, associates with EBI3 to form the IL-27 interleukin, a heterodimeric cytokine which functions in innate immunity. IL-27 has pro- and anti-inflammatory properties, that can regulate T-helper cell development, suppress T-cell proliferation, stimulate cytotoxic T-cell activity, induce isotype switching in B-cells, and that has diverse effects on innate immune cells. Among its target cells are CD4 T-helper cells which can differentiate in type 1 effector cells (TH1), type 2 effector cells (TH2) and IL17 producing helper T-cells (TH17). It drives rapid clonal expansion of naive but not memory CD4 T-cells. It also strongly synergizes with IL-12 to trigger interferon-gamma/IFN-gamma production of naive CD4 T-cells, binds to the cytokine receptor WSX-1/TCCR which appears to be required but not sufficient for IL-27-mediated signal transduction. IL-27 potentiate the early phase of TH1 response and suppress TH2 and TH17 differentiation. It induces the differentiation of TH1 cells via two distinct pathways, p38 MAPK/TBX21- and ICAM1/ITGAL/ERK-dependent pathways. It also induces STAT1, STAT3, STAT4 and STAT5 phosphorylation and activates TBX21/T-Bet via STAT1 with resulting IL12RB2 up-regulation, an event crucial to TH1 cell commitment. It suppresses the expression of GATA3, the inhibitor TH1 cells development. In CD8 T-cells, it activates STATs as well as GZMB. IL-27 reveals to be a potent inhibitor of TH17 cell development and of IL-17 production. Indeed IL27 alone is also able to inhibit the production of IL17 by CD4 and CD8 T-cells. While IL-27 suppressed the development of pro-inflammatory Th17 cells via STAT1, it inhibits the development of anti-inflammatory inducible regulatory T-cells, iTreg, independently of STAT1. IL-27 also has an effect on cytokine production, it suppresses pro-inflammatory cytokine production such as IL2, IL4, IL5 and IL6 and activates suppressors of cytokine signaling such as SOCS1 and SOCS3. Apart from suppression of cytokine production, IL-27 also antagonizes the effects of some cytokines such as IL6 through direct effects on T-cells. Another important role of IL-27 is its antitumor activity as well as its antiangiogenic activity with activation of production of antiangiogenic chemokines such as IP-10/CXCL10 and MIG/CXCL9. The protein is Interleukin-27 subunit alpha (Il27) of Mus musculus (Mouse).